A 123-amino-acid chain; its full sequence is Photosystem II extrinsic protein U (123 aa).

The N-terminal stretch at 1–28 (MKTLARILVVFTLIVGLIGFFNPLPAQA) is a signal peptide.

The protein belongs to the PsbU family. In terms of assembly, PSII is composed of 1 copy each of membrane proteins PsbA, PsbB, PsbC, PsbD, PsbE, PsbF, PsbH, PsbI, PsbJ, PsbK, PsbL, PsbM, PsbT, PsbX, PsbY, PsbZ, Psb30/Ycf12, peripheral proteins PsbO, CyanoQ (PsbQ), PsbU, PsbV and a large number of cofactors. It forms dimeric complexes.

Its subcellular location is the cellular thylakoid membrane. In terms of biological role, one of the extrinsic, lumenal subunits of photosystem II (PSII). PSII is a light-driven water plastoquinone oxidoreductase, using light energy to abstract electrons from H(2)O, generating a proton gradient subsequently used for ATP formation. The extrinsic proteins stabilize the structure of photosystem II oxygen-evolving complex (OEC), the ion environment of oxygen evolution and protect the OEC against heat-induced inactivation. This chain is Photosystem II extrinsic protein U, found in Gloeothece citriformis (strain PCC 7424) (Cyanothece sp. (strain PCC 7424)).